A 435-amino-acid polypeptide reads, in one-letter code: Serine/threonine-protein kinase 40 (435 aa).

The region spanning 35 to 332 is the Protein kinase domain; the sequence is FILGPRLGNS…EELDSLSSII (298 aa). ATP is bound by residues 41-49 and Lys-66; that span reads LGNSPVPSI. The active-site Proton acceptor is Asp-197.

This sequence belongs to the protein kinase superfamily. CAMK Ser/Thr protein kinase family.

Its subcellular location is the nucleus. The protein localises to the cytoplasm. The catalysed reaction is L-seryl-[protein] + ATP = O-phospho-L-seryl-[protein] + ADP + H(+). It catalyses the reaction L-threonyl-[protein] + ATP = O-phospho-L-threonyl-[protein] + ADP + H(+). Functionally, may be a negative regulator of NF-kappa-B and p53-mediated gene transcription. This Gallus gallus (Chicken) protein is Serine/threonine-protein kinase 40 (STK40).